The chain runs to 306 residues: Pantothenate kinase (306 aa).

ATP is bound at residue Gly91 to Ser98.

Belongs to the prokaryotic pantothenate kinase family.

The protein localises to the cytoplasm. The enzyme catalyses (R)-pantothenate + ATP = (R)-4'-phosphopantothenate + ADP + H(+). It functions in the pathway cofactor biosynthesis; coenzyme A biosynthesis; CoA from (R)-pantothenate: step 1/5. This Streptococcus pneumoniae serotype 19F (strain G54) protein is Pantothenate kinase.